Reading from the N-terminus, the 396-residue chain is Elongation factor Tu (396 aa).

The tr-type G domain maps to 10–206 (KPHVNVGTIG…ALDSYIPTPE (197 aa)). Residues 19–26 (GHVDHGKT) form a G1 region. 19–26 (GHVDHGKT) is a GTP binding site. Thr26 provides a ligand contact to Mg(2+). The G2 stretch occupies residues 60–64 (GITIN). Residues 81–84 (DCPG) are G3. GTP is bound by residues 81 to 85 (DCPGH) and 136 to 139 (NKCD). A G4 region spans residues 136 to 139 (NKCD). The tract at residues 174–176 (SAL) is G5.

It belongs to the TRAFAC class translation factor GTPase superfamily. Classic translation factor GTPase family. EF-Tu/EF-1A subfamily. In terms of assembly, monomer.

It is found in the cytoplasm. The catalysed reaction is GTP + H2O = GDP + phosphate + H(+). Its function is as follows. GTP hydrolase that promotes the GTP-dependent binding of aminoacyl-tRNA to the A-site of ribosomes during protein biosynthesis. The chain is Elongation factor Tu from Aromatoleum aromaticum (strain DSM 19018 / LMG 30748 / EbN1) (Azoarcus sp. (strain EbN1)).